Reading from the N-terminus, the 42-residue chain is Photosystem I reaction center subunit IX (42 aa).

The chain crosses the membrane as a helical span at residues 7–27 (YLSTAPVLATLWFGFLAGLLI).

Belongs to the PsaJ family.

It localises to the plastid. The protein localises to the chloroplast thylakoid membrane. Functionally, may help in the organization of the PsaE and PsaF subunits. The sequence is that of Photosystem I reaction center subunit IX from Psilotum nudum (Whisk fern).